The following is a 151-amino-acid chain: UPF0208 membrane protein NT01EI_2692 (151 aa).

The next 2 membrane-spanning stretches (helical) occupy residues 46–65 (FAIR…QIAL) and 69–91 (LGPA…WWLG).

It belongs to the UPF0208 family.

It localises to the cell inner membrane. The chain is UPF0208 membrane protein NT01EI_2692 from Edwardsiella ictaluri (strain 93-146).